A 606-amino-acid chain; its full sequence is Diphthine--ammonia ligase (606 aa).

The protein in the N-terminal section; belongs to the Diphthine--ammonia ligase family. In the C-terminal section; belongs to the RutC family.

It is found in the cytoplasm. The protein resides in the nucleus. The enzyme catalyses diphthine-[translation elongation factor 2] + NH4(+) + ATP = diphthamide-[translation elongation factor 2] + AMP + diphosphate + H(+). Its pathway is protein modification; peptidyl-diphthamide biosynthesis. Functionally, amidase that catalyzes the last step of diphthamide biosynthesis using ammonium and ATP. Diphthamide biosynthesis consists in the conversion of an L-histidine residue in the translation elongation factor eEF-2 (eft201 or eft202) to diphthamide. Has a role in meiosis. The protein is Diphthine--ammonia ligase (mug71) of Schizosaccharomyces pombe (strain 972 / ATCC 24843) (Fission yeast).